Here is a 350-residue protein sequence, read N- to C-terminus: Protein pelota homolog (350 aa).

Belongs to the eukaryotic release factor 1 family. Pelota subfamily. Monomer. The cofactor is a divalent metal cation.

The protein localises to the cytoplasm. Its function is as follows. May function in recognizing stalled ribosomes, interact with stem-loop structures in stalled mRNA molecules, and effect endonucleolytic cleavage of the mRNA. May play a role in the release non-functional ribosomes and degradation of damaged mRNAs. Has endoribonuclease activity. The sequence is that of Protein pelota homolog from Methanosarcina barkeri (strain Fusaro / DSM 804).